The chain runs to 593 residues: Prospero homeobox protein 2 (593 aa).

6 disordered regions span residues 24–48 (CMDQ…QLPS), 79–130 (SPSS…GGTR), 153–199 (TEPR…KDLC), 260–284 (QERS…SAYK), 298–333 (PQAG…QSPL), and 356–388 (GRGP…PWGL). Residues 87 to 99 (RARESLRCPEKGR) show a composition bias toward basic and acidic residues. Positions 167-181 (PRSSPRARPRNSCSS) are enriched in low complexity. Positions 363–380 (WSGSPPQDAAFQSHTSPE) are enriched in polar residues. The Prospero-type homeo domain occupies 433 to 491 (QEGLSPGHLKKAKLMFFFTRYPSSSLLKAYFPDVQFNRCITSQMIKWFSNFREFYYIQM). Residues 433–591 (QEGLSPGHLK…KSPSFLPGLF (159 aa)) are homeo-Prospero. Residues 492–591 (EKYARQALSD…KSPSFLPGLF (100 aa)) enclose the Prospero domain.

This sequence belongs to the Prospero homeodomain family. Expressed in testis.

It is found in the nucleus. Transcription regulator. Does not seem to be essential for embryonic development and postnatal survival. This Mus musculus (Mouse) protein is Prospero homeobox protein 2 (Prox2).